The following is a 412-amino-acid chain: Phosphate-repressible acid phosphatase (412 aa).

A signal peptide spans 1-19 (MLTKQTLLAFVGALALATG). N-linked (GlcNAc...) asparagine glycans are attached at residues Asn-74, Asn-121, Asn-186, and Asn-208. The active-site Proton donor is the Asp-215. Residues Asn-217, Asn-332, and Asn-343 are each glycosylated (N-linked (GlcNAc...) asparagine).

Post-translationally, the N-terminus is blocked.

It is found in the secreted. It catalyses the reaction a phosphate monoester + H2O = an alcohol + phosphate. In Penicillium chrysogenum (Penicillium notatum), this protein is Phosphate-repressible acid phosphatase (PHOA).